A 755-amino-acid chain; its full sequence is Kojibiose phosphorylase (755 aa).

Trp333 to Asp334 is a binding site for substrate. Glu473 acts as the Proton donor in catalysis. Lys573–Gln574 is a binding site for substrate.

It belongs to the glycosyl hydrolase 65 family.

The catalysed reaction is kojibiose + phosphate = beta-D-glucose 1-phosphate + D-glucose. In vitro catalyzes the phosphorolysis of D-kojibiose into beta-D-glucose 1-phosphate and D-glucose. No other disaccharides tested substitute for D-kojibiose. In the reverse direction disaccharides can be formed from beta-D-glucose 1-phosphate plus D-glucose, L-sorbose, D-sorbitol, L-iditol or 1,5-anhydro-D-glucitol, but with low efficiency. The beta-D-glucose 1-phosphate product is the substrate for YcjU (AC P77366), the next apparent enzyme in the putative biochemical pathway encoded in this locus (yjcM to ycjW). The sequence is that of Kojibiose phosphorylase (ycjT) from Escherichia coli (strain K12).